A 128-amino-acid chain; its full sequence is Centrosomal protein 15 (128 aa).

It localises to the cell projection. It is found in the cilium. May play a role in ciliary assembly. This is Centrosomal protein 15 from Homo sapiens (Human).